A 3095-amino-acid chain; its full sequence is HD protein homolog (3095 aa).

5 disordered regions span residues 105 to 197 (PHQH…NGNA), 536 to 561 (QQQQQQQQQQQQQQQQHNLTSSTMSG), 1312 to 1371 (PPQQ…STVI), 1509 to 1547 (KSTSSSSSSSSTATSPSSSSSSTTTTTTTSTNTTTTTPS), and 2005 to 2037 (KELTNNNNNNNNNIIEKEEEEKEKEKEKVKEEE). Over residues 115 to 139 (STNLTDHLSQNSVTPSVPTTPNYQQ) the composition is skewed to polar residues. 2 stretches are compositionally biased toward low complexity: residues 140-197 (SPST…NGNA) and 536-551 (QQQQQQQQQQQQQQQQ). Residues 552–561 (HNLTSSTMSG) are compositionally biased toward polar residues. 3 stretches are compositionally biased toward low complexity: residues 1315 to 1368 (QQQQ…LNNS), 1510 to 1547 (STSSSSSSSSTATSPSSSSSSTTTTTTTSTNTTTTTPS), and 2008 to 2018 (TNNNNNNNNNI).

It belongs to the huntingtin family.

It is found in the cytoplasm. The protein resides in the nucleus. Its function is as follows. May play a role in microtubule-mediated transport or vesicle function. The chain is HD protein homolog (htt) from Dictyostelium discoideum (Social amoeba).